Here is a 130-residue protein sequence, read N- to C-terminus: Small ribosomal subunit protein uS11 (130 aa).

The protein belongs to the universal ribosomal protein uS11 family. Part of the 30S ribosomal subunit. Interacts with proteins S7 and S18. Binds to IF-3.

Located on the platform of the 30S subunit, it bridges several disparate RNA helices of the 16S rRNA. Forms part of the Shine-Dalgarno cleft in the 70S ribosome. This chain is Small ribosomal subunit protein uS11, found in Prochlorococcus marinus (strain MIT 9303).